The chain runs to 138 residues: Small ribosomal subunit protein uS11c (138 aa).

This sequence belongs to the universal ribosomal protein uS11 family. In terms of assembly, part of the 30S ribosomal subunit.

The protein localises to the plastid. It is found in the chloroplast. The protein is Small ribosomal subunit protein uS11c of Acorus calamus (Sweet flag).